Reading from the N-terminus, the 172-residue chain is Secretory-abundant heat soluble protein 64681 (172 aa).

An N-terminal signal peptide occupies residues Met1–Ala19. Positions Glu30–Pro59 are SAHS-c1. Residues Trp74–Glu102 are SAHS-c2. Residues Asn108 and Asn133 are each glycosylated (N-linked (GlcNAc...) asparagine). The segment at Lys115–Lys164 is SAHS-c3.

The protein belongs to the Secretory-abundant heat soluble protein (SAHS) family.

It is found in the secreted. Secreted heat soluble protein acting as a molecular shield in water-deficient condition. Tardigrade-specific intrinsically disordered proteins (TDPs) are essential for desiccation tolerance by forming non-crystalline amorphous solids upon desiccation, and this vitrified state mirrors their protective capabilities. This Hypsibius exemplaris (Freshwater tardigrade) protein is Secretory-abundant heat soluble protein 64681.